A 382-amino-acid chain; its full sequence is Flap endonuclease 1-A (382 aa).

The segment at 1-104 (MGIHGLAKLI…GELAKRSERR (104 aa)) is N-domain. Asp-34 contacts Mg(2+). DNA is bound by residues Arg-47 and Arg-70. Residues Asp-86, Glu-158, Glu-160, Asp-179, and Asp-181 each coordinate Mg(2+). The tract at residues 122–253 (NIEKFTKRLV…KRAIDLIRQH (132 aa)) is I-domain. Glu-158 contacts DNA. Residues Gly-231 and Asp-233 each coordinate DNA. Asp-233 serves as a coordination point for Mg(2+). An interaction with PCNA region spans residues 336–344 (TQGRLDDFF). Residues 350–382 (VSSTKRKEAESKGSAKKKAKTGGTPAGKFKRGK) form a disordered region.

Belongs to the XPG/RAD2 endonuclease family. FEN1 subfamily. As to quaternary structure, interacts with PCNA. Three molecules of fen1 bind to one PCNA trimer with each molecule binding to one PCNA monomer. PCNA stimulates the nuclease activity without altering cleavage specificity. Mg(2+) is required as a cofactor. In terms of processing, phosphorylated. Phosphorylation upon DNA damage induces relocalization to the nuclear plasma.

It localises to the nucleus. Its subcellular location is the nucleolus. The protein resides in the nucleoplasm. The protein localises to the mitochondrion. Functionally, structure-specific nuclease with 5'-flap endonuclease and 5'-3' exonuclease activities involved in DNA replication and repair. During DNA replication, cleaves the 5'-overhanging flap structure that is generated by displacement synthesis when DNA polymerase encounters the 5'-end of a downstream Okazaki fragment. It enters the flap from the 5'-end and then tracks to cleave the flap base, leaving a nick for ligation. Also involved in the long patch base excision repair (LP-BER) pathway, by cleaving within the apurinic/apyrimidinic (AP) site-terminated flap. Acts as a genome stabilization factor that prevents flaps from equilibrating into structures that lead to duplications and deletions. Also possesses 5'-3' exonuclease activity on nicked or gapped double-stranded DNA, and exhibits RNase H activity. Also involved in replication and repair of rDNA and in repairing mitochondrial DNA. The protein is Flap endonuclease 1-A (fen1-a) of Xenopus laevis (African clawed frog).